The sequence spans 446 residues: tRNA-2-methylthio-N(6)-dimethylallyladenosine synthase (446 aa).

Residues 3 to 120 (KKLFIETHGC…LPEMIDAARS (118 aa)) enclose the MTTase N-terminal domain. C12, C49, C83, C157, C161, and C164 together coordinate [4Fe-4S] cluster. One can recognise a Radical SAM core domain in the interval 143–375 (RVDGPTAFVS…QSRIHQQGYE (233 aa)). In terms of domain architecture, TRAM spans 378-442 (RRMVGSTQRI…PHSLRGTLID (65 aa)).

This sequence belongs to the methylthiotransferase family. MiaB subfamily. Monomer. [4Fe-4S] cluster is required as a cofactor.

The protein resides in the cytoplasm. It catalyses the reaction N(6)-dimethylallyladenosine(37) in tRNA + (sulfur carrier)-SH + AH2 + 2 S-adenosyl-L-methionine = 2-methylsulfanyl-N(6)-dimethylallyladenosine(37) in tRNA + (sulfur carrier)-H + 5'-deoxyadenosine + L-methionine + A + S-adenosyl-L-homocysteine + 2 H(+). In terms of biological role, catalyzes the methylthiolation of N6-(dimethylallyl)adenosine (i(6)A), leading to the formation of 2-methylthio-N6-(dimethylallyl)adenosine (ms(2)i(6)A) at position 37 in tRNAs that read codons beginning with uridine. This is tRNA-2-methylthio-N(6)-dimethylallyladenosine synthase from Pseudomonas aeruginosa (strain UCBPP-PA14).